Reading from the N-terminus, the 373-residue chain is Dual-specificity RNA methyltransferase RlmN (373 aa).

Glu-104 (proton acceptor) is an active-site residue. The Radical SAM core domain occupies 110-349 (KNQRTTLCIS…VTIRKIRGYD (240 aa)). A disulfide bridge connects residues Cys-117 and Cys-354. The [4Fe-4S] cluster site is built by Cys-124, Cys-128, and Cys-131. S-adenosyl-L-methionine is bound by residues 178 to 179 (GE), Ser-210, 232 to 234 (SLH), and Asn-311. The S-methylcysteine intermediate role is filled by Cys-354.

This sequence belongs to the radical SAM superfamily. RlmN family. [4Fe-4S] cluster serves as cofactor.

The protein localises to the cytoplasm. It carries out the reaction adenosine(2503) in 23S rRNA + 2 reduced [2Fe-2S]-[ferredoxin] + 2 S-adenosyl-L-methionine = 2-methyladenosine(2503) in 23S rRNA + 5'-deoxyadenosine + L-methionine + 2 oxidized [2Fe-2S]-[ferredoxin] + S-adenosyl-L-homocysteine. It catalyses the reaction adenosine(37) in tRNA + 2 reduced [2Fe-2S]-[ferredoxin] + 2 S-adenosyl-L-methionine = 2-methyladenosine(37) in tRNA + 5'-deoxyadenosine + L-methionine + 2 oxidized [2Fe-2S]-[ferredoxin] + S-adenosyl-L-homocysteine. In terms of biological role, specifically methylates position 2 of adenine 2503 in 23S rRNA and position 2 of adenine 37 in tRNAs. m2A2503 modification seems to play a crucial role in the proofreading step occurring at the peptidyl transferase center and thus would serve to optimize ribosomal fidelity. This chain is Dual-specificity RNA methyltransferase RlmN, found in Buchnera aphidicola subsp. Baizongia pistaciae (strain Bp).